The sequence spans 881 residues: Actin-like protein ARP8 (881 aa).

The interval 1–150 (MSQEEAESSI…DPAKAPPGKK (150 aa)) is disordered. Acidic residues-rich tracts occupy residues 14–33 (EPID…EEEN) and 44–54 (ENAENESDDSV). A phosphoserine mark is found at S65 and S70. Acidic residues predominate over residues 77–114 (ADEEDEDEEGEDEDEDEDDNDVDNEDENDNDNANENEN). 502-505 (NIGA) is a binding site for ATP.

Belongs to the actin family. Component of the chromatin-remodeling INO80 complex, at least composed of ARP4, ARP5, ARP8, RVB1, RVB2, TAF14, NHP10, IES1, IES3, IES4, IES6, ACT1, IES2, IES5 and INO80. Exists as monomers and dimers, but the dimer is most probably the biologically relevant form required for stable interactions with histones that exploits the twofold symmetry of the nucleosome core.

The protein resides in the nucleus. It is found in the cytoplasm. The protein localises to the cytoskeleton. Its function is as follows. Probably involved in transcription regulation via its interaction with the INO80 complex, a chromatin remodeling complex. Exhibits low basal ATPase activity, and unable to polymerize. Strongly prefer nucleosomes and H3-H4 tetramers over H2A-H2B dimers, suggesting it may act as a nucleosome recognition module within the complex. The sequence is that of Actin-like protein ARP8 (ARP8) from Saccharomyces cerevisiae (strain ATCC 204508 / S288c) (Baker's yeast).